Reading from the N-terminus, the 406-residue chain is Transposase for insertion sequence element IS1001 (406 aa).

This sequence belongs to the transposase 12 family.

Involved in the transposition of the insertion sequence. This Bordetella parapertussis protein is Transposase for insertion sequence element IS1001 (tnpA).